The following is a 229-amino-acid chain: Chromophore lyase CpcT/CpeT 1 (229 aa).

It belongs to the CpcT/CpeT biliprotein lyase family.

Covalently attaches a chromophore to Cys residue(s) of phycobiliproteins. In Gloeobacter violaceus (strain ATCC 29082 / PCC 7421), this protein is Chromophore lyase CpcT/CpeT 1.